We begin with the raw amino-acid sequence, 406 residues long: Tryptophan 2,3-dioxygenase A (406 aa).

Substrate is bound by residues 71 to 75 (FIVTH) and Arg-143. Heme is bound at residue His-327. Thr-341 contributes to the substrate binding site.

Belongs to the tryptophan 2,3-dioxygenase family. Homotetramer. Dimer of dimers. Heme serves as cofactor.

It catalyses the reaction L-tryptophan + O2 = N-formyl-L-kynurenine. Its pathway is amino-acid degradation; L-tryptophan degradation via kynurenine pathway; L-kynurenine from L-tryptophan: step 1/2. In terms of biological role, heme-dependent dioxygenase that catalyzes the oxidative cleavage of the L-tryptophan (L-Trp) pyrrole ring and converts L-tryptophan to N-formyl-L-kynurenine. Catalyzes the oxidative cleavage of the indole moiety. The protein is Tryptophan 2,3-dioxygenase A of Danio rerio (Zebrafish).